A 1178-amino-acid chain; its full sequence is Mitosis inhibitor protein kinase SWE1 (1178 aa).

The segment covering 1 to 35 has biased composition (polar residues); sequence MDSNPCQDVSGDTSSTPMANNNPTNDSTISSQNHS. 8 disordered regions span residues 1–61, 188–209, 288–336, 378–434, 451–473, 524–543, 584–606, and 721–754; these read MDSN…HSQQ, NSQI…SSSM, SNNQ…SKGF, PTHT…SSNI, NHAR…TNIS, KNSI…PIKR, QRFP…QHHD, and KREI…GDDP. The span at 37–55 shows a compositional bias: basic residues; the sequence is IGLRKHQQQHYHQHSHSQM. The span at 299–308 shows a compositional bias: polar residues; it reads VSQSPSPSSK. Residues 388–413 are compositionally biased toward low complexity; sequence SSLNPPSSSTSNSTTAAITSTSPPAN. A compositionally biased stretch (low complexity) spans 591-601; it reads NPNTTTNNNNT. In terms of domain architecture, Protein kinase spans 791 to 1154; sequence MKNIKYIGSG…ACNILEMPEC (364 aa). Residues 797–805 and K818 contribute to the ATP site; that span reads IGSGAFSIA. The active-site Proton acceptor is the D929. Mg(2+)-binding residues include N934 and D947. A disordered region spans residues 1034–1068; the sequence is HNPNTNSNISGSGSRSGSGSTGGNGSAGDGSTNST. Residues 1037 to 1046 show a composition bias toward low complexity; sequence NTNSNISGSG. Over residues 1047–1061 the composition is skewed to gly residues; it reads SRSGSGSTGGNGSAG.

This sequence belongs to the protein kinase superfamily. Ser/Thr protein kinase family. WEE1 subfamily. In terms of processing, phosphorylated.

The protein resides in the bud neck. It localises to the nucleus. It carries out the reaction L-seryl-[protein] + ATP = O-phospho-L-seryl-[protein] + ADP + H(+). The enzyme catalyses L-threonyl-[protein] + ATP = O-phospho-L-threonyl-[protein] + ADP + H(+). In terms of biological role, protein kinase that acts as a negative regulator of entry into mitosis (G2 to M transition) by phosphorylating and inhibiting the mitosis-promoting cyclin B-bound CDC28 at 'Tyr-18'. SWE1-mediated inhibition of CDC28 acts in a cell size or morphogenesis checkpoint to delay mitosis in response to defects in growth, actin organization or bud formation. Plays an important role in filamentous growth. The sequence is that of Mitosis inhibitor protein kinase SWE1 (SWE1) from Candida albicans (strain SC5314 / ATCC MYA-2876) (Yeast).